A 610-amino-acid chain; its full sequence is Aspartate--tRNA(Asp/Asn) ligase (610 aa).

Glu196 serves as a coordination point for L-aspartate. Residues 220-223 (QIFK) form an aspartate region. Position 242 (Arg242) interacts with L-aspartate. Residues 242–244 (RDE) and Gln251 contribute to the ATP site. L-aspartate is bound at residue His465. Glu499 serves as a coordination point for ATP. Position 506 (Arg506) interacts with L-aspartate. Position 551–554 (551–554 (GMDR)) interacts with ATP.

It belongs to the class-II aminoacyl-tRNA synthetase family. Type 1 subfamily. As to quaternary structure, homodimer.

Its subcellular location is the cytoplasm. The catalysed reaction is tRNA(Asx) + L-aspartate + ATP = L-aspartyl-tRNA(Asx) + AMP + diphosphate. Functionally, aspartyl-tRNA synthetase with relaxed tRNA specificity since it is able to aspartylate not only its cognate tRNA(Asp) but also tRNA(Asn). Reaction proceeds in two steps: L-aspartate is first activated by ATP to form Asp-AMP and then transferred to the acceptor end of tRNA(Asp/Asn). The chain is Aspartate--tRNA(Asp/Asn) ligase from Nitratidesulfovibrio vulgaris (strain ATCC 29579 / DSM 644 / CCUG 34227 / NCIMB 8303 / VKM B-1760 / Hildenborough) (Desulfovibrio vulgaris).